The sequence spans 321 residues: Protein BIG GRAIN 1-like E (321 aa).

Residues 134–217 (AGSKKNKSKS…PPPYLNTPTK (84 aa)) are disordered. Basic residues predominate over residues 135-147 (GSKKNKSKSKSKT). Over residues 172-206 (ISHFFSSSRSTSTTTTTTASSSSKSLISSSSSGFR) the composition is skewed to low complexity.

The protein belongs to the BIG GRAIN 1 (BG1) plant protein family.

The protein resides in the cell membrane. Involved in auxin transport. Regulator of the auxin signaling pathway. This Arabidopsis thaliana (Mouse-ear cress) protein is Protein BIG GRAIN 1-like E.